The sequence spans 208 residues: Protein GrpE (208 aa).

Positions 1-12 (MTNKDESVKKNT) are enriched in basic and acidic residues. Residues 1-51 (MTNKDESVKKNTESTVEETNVKQNIDDSVEQAEESKGHLQDEAIEETSDEN) are disordered. Residues 13–23 (ESTVEETNVKQ) show a composition bias toward polar residues. Residues 42 to 51 (EAIEETSDEN) are compositionally biased toward acidic residues.

The protein belongs to the GrpE family. As to quaternary structure, homodimer.

It localises to the cytoplasm. Functionally, participates actively in the response to hyperosmotic and heat shock by preventing the aggregation of stress-denatured proteins, in association with DnaK and GrpE. It is the nucleotide exchange factor for DnaK and may function as a thermosensor. Unfolded proteins bind initially to DnaJ; upon interaction with the DnaJ-bound protein, DnaK hydrolyzes its bound ATP, resulting in the formation of a stable complex. GrpE releases ADP from DnaK; ATP binding to DnaK triggers the release of the substrate protein, thus completing the reaction cycle. Several rounds of ATP-dependent interactions between DnaJ, DnaK and GrpE are required for fully efficient folding. The polypeptide is Protein GrpE (Staphylococcus aureus (strain COL)).